Here is a 460-residue protein sequence, read N- to C-terminus: Ribosomal protein uS12 methylthiotransferase RimO (460 aa).

Residues 16-130 form the MTTase N-terminal domain; sequence NKIHFISLGC…ILSAIESKES (115 aa). Positions 25, 61, 93, 164, 168, and 171 each coordinate [4Fe-4S] cluster. The 233-residue stretch at 150-382 folds into the Radical SAM core domain; that stretch reads STPKHYAYLK…SQTQKKNVEK (233 aa). Positions 385-455 constitute a TRAM domain; it reads KQFVGKIVEA…GYDLVGRVVN (71 aa).

The protein belongs to the methylthiotransferase family. RimO subfamily. It depends on [4Fe-4S] cluster as a cofactor.

It is found in the cytoplasm. The enzyme catalyses L-aspartate(89)-[ribosomal protein uS12]-hydrogen + (sulfur carrier)-SH + AH2 + 2 S-adenosyl-L-methionine = 3-methylsulfanyl-L-aspartate(89)-[ribosomal protein uS12]-hydrogen + (sulfur carrier)-H + 5'-deoxyadenosine + L-methionine + A + S-adenosyl-L-homocysteine + 2 H(+). Catalyzes the methylthiolation of an aspartic acid residue of ribosomal protein uS12. This Chlamydia abortus (strain DSM 27085 / S26/3) (Chlamydophila abortus) protein is Ribosomal protein uS12 methylthiotransferase RimO.